The following is a 255-amino-acid chain: S-adenosyl-L-methionine-dependent uroporphyrinogen III methyltransferase (255 aa).

S-adenosyl-L-homocysteine-binding positions include Pro-15, 91–93 (GGD), 121–122 (TS), Met-175, and Ala-232.

It belongs to the precorrin methyltransferase family. As to quaternary structure, homodimer.

The catalysed reaction is uroporphyrinogen III + 2 S-adenosyl-L-methionine = precorrin-2 + 2 S-adenosyl-L-homocysteine + H(+). It participates in porphyrin-containing compound metabolism; siroheme biosynthesis; precorrin-2 from uroporphyrinogen III: step 1/1. In terms of biological role, involved in the archaeal biosynthesis of heme. Catalyzes the methylation of carbons 2 and 7 of uroporphyrinogen-III (UROGEN) to yield precorrin-2. It does not catalyze the overmethylation of precorrin-2 to trimethylpyrrocorphin. The protein is S-adenosyl-L-methionine-dependent uroporphyrinogen III methyltransferase of Methanosarcina barkeri (strain Fusaro / DSM 804).